Reading from the N-terminus, the 699-residue chain is 4-alpha-glucanotransferase (699 aa).

It belongs to the disproportionating enzyme family.

Its subcellular location is the cytoplasm. It carries out the reaction Transfers a segment of a (1-&gt;4)-alpha-D-glucan to a new position in an acceptor, which may be glucose or a (1-&gt;4)-alpha-D-glucan.. The sequence is that of 4-alpha-glucanotransferase (malQ) from Haemophilus influenzae (strain ATCC 51907 / DSM 11121 / KW20 / Rd).